A 392-amino-acid polypeptide reads, in one-letter code: Chalcone synthase B (392 aa).

C167 is a catalytic residue.

Belongs to the thiolase-like superfamily. Chalcone/stilbene synthases family. Expressed at low level in seedlings after illumination with UV light. No expression in flowers or tissue culture.

The enzyme catalyses (E)-4-coumaroyl-CoA + 3 malonyl-CoA + 3 H(+) = 2',4,4',6'-tetrahydroxychalcone + 3 CO2 + 4 CoA. It functions in the pathway secondary metabolite biosynthesis; flavonoid biosynthesis. In terms of biological role, the primary product of this enzyme is 4,2',4',6'-tetrahydroxychalcone (also termed naringenin-chalcone or chalcone) which can under specific conditions spontaneously isomerize into naringenin. The protein is Chalcone synthase B (CHSB) of Petunia hybrida (Petunia).